A 294-amino-acid chain; its full sequence is Glutamyl-Q tRNA(Asp) synthetase (294 aa).

Residues 8–12 and E44 each bind L-glutamate; that span reads RFAPT. The 'HIGH' region signature appears at 11-21; it reads PTPSGYLHFGS. C100, C102, Y114, and C118 together coordinate Zn(2+). Residues Y171 and R189 each contribute to the L-glutamate site. The 'KMSKS' region motif lies at 227–231; the sequence is KLGKS. Residue K230 coordinates ATP.

Belongs to the class-I aminoacyl-tRNA synthetase family. GluQ subfamily. The cofactor is Zn(2+).

In terms of biological role, catalyzes the tRNA-independent activation of glutamate in presence of ATP and the subsequent transfer of glutamate onto a tRNA(Asp). Glutamate is transferred on the 2-amino-5-(4,5-dihydroxy-2-cyclopenten-1-yl) moiety of the queuosine in the wobble position of the QUC anticodon. The chain is Glutamyl-Q tRNA(Asp) synthetase from Ectopseudomonas mendocina (strain ymp) (Pseudomonas mendocina).